A 342-amino-acid polypeptide reads, in one-letter code: Glycerol-3-phosphate dehydrogenase [NAD(P)+] (342 aa).

3 residues coordinate NADPH: tryptophan 11, arginine 31, and lysine 102. Residues lysine 102 and glycine 132 each coordinate sn-glycerol 3-phosphate. Alanine 136 lines the NADPH pocket. Sn-glycerol 3-phosphate is bound by residues lysine 187, aspartate 240, serine 250, arginine 251, and asparagine 252. Lysine 187 functions as the Proton acceptor in the catalytic mechanism. Arginine 251 is a binding site for NADPH. Glutamate 277 serves as a coordination point for NADPH.

This sequence belongs to the NAD-dependent glycerol-3-phosphate dehydrogenase family.

It localises to the cytoplasm. It carries out the reaction sn-glycerol 3-phosphate + NAD(+) = dihydroxyacetone phosphate + NADH + H(+). The catalysed reaction is sn-glycerol 3-phosphate + NADP(+) = dihydroxyacetone phosphate + NADPH + H(+). Its pathway is membrane lipid metabolism; glycerophospholipid metabolism. In terms of biological role, catalyzes the reduction of the glycolytic intermediate dihydroxyacetone phosphate (DHAP) to sn-glycerol 3-phosphate (G3P), the key precursor for phospholipid synthesis. The polypeptide is Glycerol-3-phosphate dehydrogenase [NAD(P)+] (Symbiobacterium thermophilum (strain DSM 24528 / JCM 14929 / IAM 14863 / T)).